The following is a 482-amino-acid chain: Cysteine--tRNA ligase (482 aa).

A Zn(2+)-binding site is contributed by cysteine 29. The short motif at 31–41 (PTVYDFAHIGN) is the 'HIGH' region element. Cysteine 224, histidine 249, and glutamate 253 together coordinate Zn(2+). A 'KMSKS' region motif is present at residues 282–286 (KMSKS). Position 285 (lysine 285) interacts with ATP.

This sequence belongs to the class-I aminoacyl-tRNA synthetase family. Monomer. Zn(2+) serves as cofactor.

Its subcellular location is the cytoplasm. It catalyses the reaction tRNA(Cys) + L-cysteine + ATP = L-cysteinyl-tRNA(Cys) + AMP + diphosphate. In Nitrobacter hamburgensis (strain DSM 10229 / NCIMB 13809 / X14), this protein is Cysteine--tRNA ligase.